Reading from the N-terminus, the 130-residue chain is Small ribosomal subunit protein uS9 (130 aa).

Positions 102 to 130 are disordered; it reads GFLTRDPRMKERKKYGLKKARRAPQFSKR. Residues 111–130 are compositionally biased toward basic residues; it reads KERKKYGLKKARRAPQFSKR.

It belongs to the universal ribosomal protein uS9 family.

The polypeptide is Small ribosomal subunit protein uS9 (Clostridium novyi (strain NT)).